A 237-amino-acid polypeptide reads, in one-letter code: Demethylmenaquinone methyltransferase (237 aa).

Residues Thr-58, Asp-79, and 106–107 (NA) each bind S-adenosyl-L-methionine.

It belongs to the class I-like SAM-binding methyltransferase superfamily. MenG/UbiE family.

The catalysed reaction is a 2-demethylmenaquinol + S-adenosyl-L-methionine = a menaquinol + S-adenosyl-L-homocysteine + H(+). It functions in the pathway quinol/quinone metabolism; menaquinone biosynthesis; menaquinol from 1,4-dihydroxy-2-naphthoate: step 2/2. Methyltransferase required for the conversion of demethylmenaquinol (DMKH2) to menaquinol (MKH2). The sequence is that of Demethylmenaquinone methyltransferase from Bacillus cytotoxicus (strain DSM 22905 / CIP 110041 / 391-98 / NVH 391-98).